We begin with the raw amino-acid sequence, 416 residues long: NADH-quinone oxidoreductase subunit D (416 aa).

The protein belongs to the complex I 49 kDa subunit family. NDH-1 is composed of 14 different subunits. Subunits NuoB, C, D, E, F, and G constitute the peripheral sector of the complex.

It is found in the cell inner membrane. The enzyme catalyses a quinone + NADH + 5 H(+)(in) = a quinol + NAD(+) + 4 H(+)(out). Functionally, NDH-1 shuttles electrons from NADH, via FMN and iron-sulfur (Fe-S) centers, to quinones in the respiratory chain. The immediate electron acceptor for the enzyme in this species is believed to be ubiquinone. Couples the redox reaction to proton translocation (for every two electrons transferred, four hydrogen ions are translocated across the cytoplasmic membrane), and thus conserves the redox energy in a proton gradient. This chain is NADH-quinone oxidoreductase subunit D, found in Caulobacter sp. (strain K31).